A 53-amino-acid chain; its full sequence is UPF0391 membrane protein GFO_1615 (53 aa).

2 consecutive transmembrane segments (helical) span residues 4 to 24 and 27 to 47; these read LIVIFLIIAIIAAIFGFGGVA and AADIAKIIFYIFLVLLVISVL.

Belongs to the UPF0391 family.

It is found in the cell membrane. The polypeptide is UPF0391 membrane protein GFO_1615 (Christiangramia forsetii (strain DSM 17595 / CGMCC 1.15422 / KT0803) (Gramella forsetii)).